We begin with the raw amino-acid sequence, 319 residues long: D-alanine--D-alanine ligase B (319 aa).

An ATP-grasp domain is found at 117–312 (KQVWQSLGPA…FQQLVLAILA (196 aa)). An ATP-binding site is contributed by 143 to 198 (ATELGFPLIVKPAHEGSSIGMAKVNSVDELIAAWKAASTYDSQVLVEQWIQGPEFT). Positions 266, 279, and 281 each coordinate Mg(2+).

It belongs to the D-alanine--D-alanine ligase family. Mg(2+) is required as a cofactor. It depends on Mn(2+) as a cofactor.

Its subcellular location is the cytoplasm. It catalyses the reaction 2 D-alanine + ATP = D-alanyl-D-alanine + ADP + phosphate + H(+). It functions in the pathway cell wall biogenesis; peptidoglycan biosynthesis. Cell wall formation. The polypeptide is D-alanine--D-alanine ligase B (Pseudomonas syringae pv. tomato (strain ATCC BAA-871 / DC3000)).